Reading from the N-terminus, the 203-residue chain is Urease accessory protein UreG (203 aa).

Residue 14-21 (GPVGAGKT) coordinates GTP.

Belongs to the SIMIBI class G3E GTPase family. UreG subfamily. In terms of assembly, homodimer. UreD, UreF and UreG form a complex that acts as a GTP-hydrolysis-dependent molecular chaperone, activating the urease apoprotein by helping to assemble the nickel containing metallocenter of UreC. The UreE protein probably delivers the nickel.

It localises to the cytoplasm. In terms of biological role, facilitates the functional incorporation of the urease nickel metallocenter. This process requires GTP hydrolysis, probably effectuated by UreG. The sequence is that of Urease accessory protein UreG from Jannaschia sp. (strain CCS1).